The following is a 209-amino-acid chain: MKKLVTGLLALSLFLAACGQDSDQQKDSNKEKDDKAKTEQQDKKTNDSSKDKKDNKDDSKDVNKDNKDNSANDNQQQSNSNATNNDQNQTNNNQSNSGQTTNNQKSSYVAPYYGQNAAPVARQIYPFNGNKSQALQQLPNFQTALNAANNEANKFGNGHKVYNDYSIEEHNGNYKYVFSFKDPNVNGKYSIVTVDYTGQAMVTDPNYQQ.

An N-terminal signal peptide occupies residues 1-17 (MKKLVTGLLALSLFLAA). Positions 17–106 (ACGQDSDQQK…SGQTTNNQKS (90 aa)) are disordered. Cys18 carries N-palmitoyl cysteine lipidation. Cys18 is lipidated: S-diacylglycerol cysteine. The span at 23–70 (DQQKDSNKEKDDKAKTEQQDKKTNDSSKDKKDNKDDSKDVNKDNKDNS) shows a compositional bias: basic and acidic residues. A compositionally biased stretch (low complexity) spans 71-106 (ANDNQQQSNSNATNNDQNQTNNNQSNSGQTTNNQKS).

The protein resides in the cell membrane. This is an uncharacterized protein from Staphylococcus aureus (strain MRSA252).